Reading from the N-terminus, the 393-residue chain is Protein TsgA (393 aa).

12 helical membrane-spanning segments follow: residues 11–31 (WISF…GMVM), 51–71 (FLNA…EIVP), 78–98 (FGFL…SLAL), 101–121 (AAMF…TFLI), 134–154 (LLFT…IAAF), 162–182 (WYWV…LTFG), 206–226 (IGVL…LGFI), 245–265 (TLVS…SFIL), 273–293 (ILTV…TGTP), 297–317 (AWSI…IITL), 332–352 (FVLT…GPIV), and 361–381 (LLTA…LGFV).

Belongs to the major facilitator superfamily. TsgA family.

The protein localises to the cell inner membrane. The polypeptide is Protein TsgA (Shigella dysenteriae serotype 1 (strain Sd197)).